A 294-amino-acid chain; its full sequence is Acetyl-coenzyme A carboxylase carboxyl transferase subunit beta (294 aa).

Residues 25–294 (VWTKCTSCEQ…PLVVPVDGSH (270 aa)) enclose the CoA carboxyltransferase N-terminal domain. Zn(2+) is bound by residues Cys29, Cys32, Cys48, and Cys51. The segment at 29 to 51 (CTSCEQVLYSAELERNLEVCPKC) adopts a C4-type zinc-finger fold.

The protein belongs to the AccD/PCCB family. As to quaternary structure, acetyl-CoA carboxylase is a heterohexamer composed of biotin carboxyl carrier protein (AccB), biotin carboxylase (AccC) and two subunits each of ACCase subunit alpha (AccA) and ACCase subunit beta (AccD). Zn(2+) is required as a cofactor.

The protein localises to the cytoplasm. It catalyses the reaction N(6)-carboxybiotinyl-L-lysyl-[protein] + acetyl-CoA = N(6)-biotinyl-L-lysyl-[protein] + malonyl-CoA. Its pathway is lipid metabolism; malonyl-CoA biosynthesis; malonyl-CoA from acetyl-CoA: step 1/1. In terms of biological role, component of the acetyl coenzyme A carboxylase (ACC) complex. Biotin carboxylase (BC) catalyzes the carboxylation of biotin on its carrier protein (BCCP) and then the CO(2) group is transferred by the transcarboxylase to acetyl-CoA to form malonyl-CoA. In Aliivibrio fischeri (strain ATCC 700601 / ES114) (Vibrio fischeri), this protein is Acetyl-coenzyme A carboxylase carboxyl transferase subunit beta.